The sequence spans 232 residues: LexA repressor (232 aa).

Positions 1-25 (MSDDSSDSTDAPGTSRSRDSGLTER) are disordered. Over residues 16-25 (RSRDSGLTER) the composition is skewed to basic and acidic residues. The H-T-H motif DNA-binding region spans 46–66 (IREIGDAVGLTSTSSVAHQLR). Active-site for autocatalytic cleavage activity residues include serine 156 and lysine 193.

The protein belongs to the peptidase S24 family. As to quaternary structure, homodimer.

It catalyses the reaction Hydrolysis of Ala-|-Gly bond in repressor LexA.. Represses a number of genes involved in the response to DNA damage (SOS response), including recA and lexA. In the presence of single-stranded DNA, RecA interacts with LexA causing an autocatalytic cleavage which disrupts the DNA-binding part of LexA, leading to derepression of the SOS regulon and eventually DNA repair. The sequence is that of LexA repressor from Mycolicibacterium gilvum (strain PYR-GCK) (Mycobacterium gilvum (strain PYR-GCK)).